The sequence spans 335 residues: Phospholipid scramblase 1 (335 aa).

The segment at 1 to 101 is proline-rich domain (PRD); sequence MEKHGPPEHA…NHPGGPGGTP (101 aa). The tract at residues 1-102 is disordered; it reads MEKHGPPEHA…HPGGPGGTPW (102 aa). Over 1 to 305 the chain is Cytoplasmic; that stretch reads MEKHGPPEHA…IQFPLDLDVK (305 aa). 6 consecutive repeat copies span residues 23–29, 30–36, 37–43, 44–50, 51–57, and 58–64. The segment at 23 to 71 is 7 X 7 AA tandem repeats of Q-G-P-Y-[AP]-G-P; that stretch reads QGPYPGPQGPYPGPQGPYAGPQGPYPGPQGPYAGPQGPYPGPQPGYPVP. The segment covering 26-37 has biased composition (pro residues); sequence YPGPQGPYPGPQ. Pro residues predominate over residues 59–72; sequence GPYPGPQPGYPVPP. An SH3-binding 1 motif is present at residues 64–72; sequence PQPGYPVPP. The 7; approximate repeat unit spans residues 65 to 71; the sequence is QPGYPVP. Tyr-91 carries the phosphotyrosine; by ABL modification. Residues 101–109 carry the SH3-binding 2 motif; that stretch reads PWMQAPPPP. Phosphothreonine; by PKC/PRKCD is present on Thr-178. 4 S-palmitoyl cysteine lipidation sites follow: Cys-201, Cys-202, Cys-205, and Cys-206. The Nuclear localization signal motif lies at 274 to 283; it reads GKISKQWSGF. Residues 306–322 form a helical membrane-spanning segment; that stretch reads MKAVMLGACFLIDFMFF. The Extracellular segment spans residues 323–335; the sequence is ERTGNEEQRSGVW.

Belongs to the phospholipid scramblase family. In terms of assembly, forms homooligomers in the presence of calcium. Interacts with ABL. Interacts with RELT, RELL1 and RELL2. Interacts with OXSR1 in the presence of RELT. Interacts with OCLN, TOP2A and TOP2B. Interacts with TRPC1, TRPC4 and TRPC5. Interacts with ILDR1. The cofactor is Ca(2+). Requires Mg(2+) as cofactor. It depends on Zn(2+) as a cofactor. In terms of processing, phosphorylated on tyrosine residues. Phosphorylated by OXSR1 in the presence of RELT. Phosphorylation at Thr-178 by PKC/PKCD increases its phospholipid scramblase activity during both cell stimulation and apoptosis. Post-translationally, palmitoylation is required for its phospholipid scramblase activity. Palmitoylation regulates its localization to the cell membrane or the nucleus; trafficking to the cell membrane is dependent upon palmitoylation whereas in the absence of palmitoylation, localizes to the nucleus.

Its subcellular location is the cell membrane. The protein localises to the nucleus. It localises to the cytoplasm. It is found in the perinuclear region. It carries out the reaction a 1,2-diacyl-sn-glycero-3-phosphocholine(in) = a 1,2-diacyl-sn-glycero-3-phosphocholine(out). It catalyses the reaction a 1,2-diacyl-sn-glycero-3-phosphoethanolamine(in) = a 1,2-diacyl-sn-glycero-3-phosphoethanolamine(out). The catalysed reaction is a 1,2-diacyl-sn-glycero-3-phospho-L-serine(in) = a 1,2-diacyl-sn-glycero-3-phospho-L-serine(out). Catalyzes calcium-induced ATP-independent rapid bidirectional and non-specific distribution of phospholipids (lipid scrambling or lipid flip-flop) between the inner and outer leaflet of the plasma membrane resulting in collapse of the phospholipid asymmetry which leads to phosphatidylserine externalization on the cell surface. Mediates calcium-dependent phosphatidylserine externalization and apoptosis in neurons via its association with TRPC5. Also exhibits magnesium-dependent nuclease activity against double-stranded DNA and RNA but not single-stranded DNA and can enhance DNA decatenation mediated by TOP2A. Negatively regulates FcR-mediated phagocytosis in differentiated macrophages. May contribute to cytokine-regulated cell proliferation and differentiation. The chain is Phospholipid scramblase 1 (Plscr1) from Rattus norvegicus (Rat).